The primary structure comprises 131 residues: Profilin-A (131 aa).

This sequence belongs to the profilin family. As to quaternary structure, occurs in many kinds of cells as a complex with monomeric actin in a 1:1 ratio.

Its subcellular location is the cytoplasm. It localises to the cytoskeleton. In terms of biological role, binds to actin and affects the structure of the cytoskeleton. At high concentrations, profilin prevents the polymerization of actin, whereas it enhances it at low concentrations. By binding to PIP2, it inhibits the formation of IP3 and DG. May serve as a modulator in pollen germination and pollen tube growth. This is Profilin-A from Oryza sativa subsp. japonica (Rice).